A 327-amino-acid polypeptide reads, in one-letter code: Flotillin-like protein FloA (327 aa).

The next 2 membrane-spanning stretches (helical) occupy residues 8 to 28 (VLLI…LVPI) and 29 to 49 (PLWI…LVGM).

This sequence belongs to the flotillin-like FloA family. As to quaternary structure, homooligomerizes.

The protein localises to the cell membrane. The protein resides in the membrane raft. Its function is as follows. Found in functional membrane microdomains (FMM) that may be equivalent to eukaryotic membrane rafts. FMMs are highly dynamic and increase in number as cells age. Flotillins are thought to be important factors in membrane fluidity. The chain is Flotillin-like protein FloA from Exiguobacterium sibiricum (strain DSM 17290 / CCUG 55495 / CIP 109462 / JCM 13490 / 255-15).